The primary structure comprises 597 residues: DNA polymerase III subunit gamma/tau (597 aa).

44–51 (GERGTGKT) lines the ATP pocket. Zn(2+) is bound by residues C63, C72, C75, and C78.

The protein belongs to the DnaX/STICHEL family. DNA polymerase III contains a core (composed of alpha, epsilon and theta chains) that associates with a tau subunit. This core dimerizes to form the POLIII' complex. PolIII' associates with the gamma complex (composed of gamma, delta, delta', psi and chi chains) and with the beta chain to form the complete DNA polymerase III complex.

The catalysed reaction is DNA(n) + a 2'-deoxyribonucleoside 5'-triphosphate = DNA(n+1) + diphosphate. In terms of biological role, DNA polymerase III is a complex, multichain enzyme responsible for most of the replicative synthesis in bacteria. This DNA polymerase also exhibits 3' to 5' exonuclease activity. This is DNA polymerase III subunit gamma/tau (dnaX) from Mycoplasma genitalium (strain ATCC 33530 / DSM 19775 / NCTC 10195 / G37) (Mycoplasmoides genitalium).